The following is a 234-amino-acid chain: Ribulose-phosphate 3-epimerase (234 aa).

Substrate is bound at residue serine 7. The a divalent metal cation site is built by histidine 32, aspartate 34, and histidine 65. Aspartate 34 acts as the Proton acceptor in catalysis. Residues histidine 65, 139–142 (GFSG), 172–174 (DGG), and 194–195 (AS) contribute to the substrate site. A divalent metal cation is bound at residue aspartate 172. Aspartate 172 (proton donor) is an active-site residue.

The protein belongs to the ribulose-phosphate 3-epimerase family. A divalent metal cation is required as a cofactor.

The enzyme catalyses D-ribulose 5-phosphate = D-xylulose 5-phosphate. It participates in carbohydrate degradation. Catalyzes the reversible epimerization of D-ribulose 5-phosphate to D-xylulose 5-phosphate. The sequence is that of Ribulose-phosphate 3-epimerase from Methanocaldococcus jannaschii (strain ATCC 43067 / DSM 2661 / JAL-1 / JCM 10045 / NBRC 100440) (Methanococcus jannaschii).